The sequence spans 68 residues: Phycobilisome 7.8 kDa linker polypeptide, allophycocyanin-associated, core (68 aa).

Residues 2–57 (SRLFKITALVPSLSRTRTQRELQNTYFTKLVPYENWFREQQRIQKAGGKIIKVELA) enclose the CpcD-like domain.

It belongs to the phycobilisome linker protein family.

The protein localises to the cellular thylakoid membrane. Rod linker protein, associated with allophycocyanin. Linker polypeptides determine the state of aggregation and the location of the disk-shaped phycobiliprotein units within the phycobilisome and modulate their spectroscopic properties in order to mediate a directed and optimal energy transfer. The sequence is that of Phycobilisome 7.8 kDa linker polypeptide, allophycocyanin-associated, core (apcC) from Nostoc sp. (strain PCC 7120 / SAG 25.82 / UTEX 2576).